Here is a 275-residue protein sequence, read N- to C-terminus: MSSGDRKHASGGAVTVSRMRAMKREGRPLACLTAYDYGFAAACERAGVDLLLIGDSLGMVVQGHETTLPVTVDDMVYHTRCVARACRRALVVADLPFMSHTGVEQGLHNAGRLMKEGGAQMVKLEGGAEQAALVERLAQNGIPVCGHLGLKPQQVHKIGGYRVQGREQADAERMEADALALEAAGADLLILECVPAVLAQQLSERLTVPVVGIGAGGGCDGQILVLHDVLGVTEQPPRFARAFGAEGGGVHAALEAYVAAVRAGTFPGPEHGFEA.

Residues D55 and D94 each contribute to the Mg(2+) site. Residues D55–S56, D94, and K123 contribute to the 3-methyl-2-oxobutanoate site. E125 contacts Mg(2+). E192 (proton acceptor) is an active-site residue.

Belongs to the PanB family. In terms of assembly, homodecamer; pentamer of dimers. Mg(2+) serves as cofactor.

The protein localises to the cytoplasm. It catalyses the reaction 3-methyl-2-oxobutanoate + (6R)-5,10-methylene-5,6,7,8-tetrahydrofolate + H2O = 2-dehydropantoate + (6S)-5,6,7,8-tetrahydrofolate. The protein operates within cofactor biosynthesis; (R)-pantothenate biosynthesis; (R)-pantoate from 3-methyl-2-oxobutanoate: step 1/2. In terms of biological role, catalyzes the reversible reaction in which hydroxymethyl group from 5,10-methylenetetrahydrofolate is transferred onto alpha-ketoisovalerate to form ketopantoate. This is 3-methyl-2-oxobutanoate hydroxymethyltransferase from Halorhodospira halophila (strain DSM 244 / SL1) (Ectothiorhodospira halophila (strain DSM 244 / SL1)).